The chain runs to 397 residues: Tryptophan synthase beta chain (397 aa).

Position 88 is an N6-(pyridoxal phosphate)lysine (K88).

It belongs to the TrpB family. Tetramer of two alpha and two beta chains. The cofactor is pyridoxal 5'-phosphate.

It catalyses the reaction (1S,2R)-1-C-(indol-3-yl)glycerol 3-phosphate + L-serine = D-glyceraldehyde 3-phosphate + L-tryptophan + H2O. The protein operates within amino-acid biosynthesis; L-tryptophan biosynthesis; L-tryptophan from chorismate: step 5/5. Its function is as follows. The beta subunit is responsible for the synthesis of L-tryptophan from indole and L-serine. The chain is Tryptophan synthase beta chain from Haemophilus influenzae (strain PittEE).